The following is a 69-amino-acid chain: Pleurain-A2 (69 aa).

A signal peptide spans methionine 1–cysteine 22. A propeptide spanning residues lysine 23–arginine 43 is cleaved from the precursor. Cysteines 63 and 69 form a disulfide.

Expressed by the skin glands.

The protein localises to the secreted. Its function is as follows. Antimicrobial peptide. Has activity against the Gram-positive bacterium S.aureus ATCC2592 (MIC=15 ug/ml), the Gram-negative bacteria E.coli ATCC25922 (MIC=60 ug/ml), B.dysenteriae (MIC=60 ug/ml), H.pylori NTCT11637 (MIC=30 ug/ml), and the fungus C.albicans ATCC2002 (MIC=30 ug/ml). Has little hemolytic activity on rabbit red blood cells. In Nidirana pleuraden (Yunnan pond frog), this protein is Pleurain-A2.